The primary structure comprises 99 residues: Integration host factor subunit alpha (99 aa).

It belongs to the bacterial histone-like protein family. Heterodimer of an alpha and a beta chain.

This protein is one of the two subunits of integration host factor, a specific DNA-binding protein that functions in genetic recombination as well as in transcriptional and translational control. The polypeptide is Integration host factor subunit alpha (Enterobacter sp. (strain 638)).